Here is a 108-residue protein sequence, read N- to C-terminus: Large ribosomal subunit protein bL31B (108 aa).

Residues 81-108 (KPAQPVQAPAEEGPVVKGKKKAPAKKKK) are disordered. Basic residues predominate over residues 97 to 108 (KGKKKAPAKKKK).

Belongs to the bacterial ribosomal protein bL31 family. Type B subfamily. As to quaternary structure, part of the 50S ribosomal subunit.

The chain is Large ribosomal subunit protein bL31B from Chlamydia caviae (strain ATCC VR-813 / DSM 19441 / 03DC25 / GPIC) (Chlamydophila caviae).